Reading from the N-terminus, the 475-residue chain is B-type cell cycle switch protein ccs52A (475 aa).

Residues 1–29 (MDGTGNRNPPPTSTVGDNSPPPEPSPESL) are disordered. Residues 7–28 (RNPPPTSTVGDNSPPPEPSPES) carry the PEST motif motif. 2 positions are modified to phosphoserine: Ser43 and Ser45. A C-box motif is present at residues 51–57 (DRFIPSR). Positions 80-91 (AYTTLLRTALFG) match the CSM motif motif. The residue at position 99 (Thr99) is a Phosphothreonine. Residues Ser144 and Ser155 each carry the phosphoserine modification. WD repeat units lie at residues 166 to 203 (QDDF…VTKL), 207 to 246 (GVDD…KIRS), 249 to 289 (GHRL…SKLS), 290 to 329 (GHKS…PVLK), 332 to 374 (EHTA…HLSC), 376 to 417 (DTGS…KLAT), and 420 to 459 (GHTY…KSQN). Position 454 is a phosphoserine (Ser454).

The protein belongs to the WD repeat CDC20/Fizzy family. As to expression, mostly expressed in nodules, and, to a lower extent, in root tips, stems, hypocotyls, leaves, flower buds and flowers.

It is found in the nucleus. It participates in protein modification; protein ubiquitination. Component of the anaphase promoting complex/cyclosome (APC/C), a cell cycle-regulated E3 ubiquitin-protein ligase complex that controls progression through mitosis and the G1 phase of the cell cycle. Required to switch form cell proliferation to cell differentiation, endoreduplication and ploidy-dependent cell enlargement, including during nodulation, before nodule differentiation. Involved in root-knot nematode Meloidogyne incognita giant cells formation. The protein is B-type cell cycle switch protein ccs52A of Medicago truncatula (Barrel medic).